A 719-amino-acid polypeptide reads, in one-letter code: Polyribonucleotide nucleotidyltransferase (719 aa).

Positions 491 and 497 each coordinate Mg(2+). Positions 558-617 (PRMLTIKINPEKIRDVIGKGGATIRALTEETGTQIDISDDGTIVIASVDETQAKEAQRRI) constitute a KH domain. The region spanning 627–695 (GQIYDGSVLR…DKGRLRLSIK (69 aa)) is the S1 motif domain.

The protein belongs to the polyribonucleotide nucleotidyltransferase family. Requires Mg(2+) as cofactor.

Its subcellular location is the cytoplasm. It carries out the reaction RNA(n+1) + phosphate = RNA(n) + a ribonucleoside 5'-diphosphate. Its function is as follows. Involved in mRNA degradation. Catalyzes the phosphorolysis of single-stranded polyribonucleotides processively in the 3'- to 5'-direction. The protein is Polyribonucleotide nucleotidyltransferase of Bordetella bronchiseptica (strain ATCC BAA-588 / NCTC 13252 / RB50) (Alcaligenes bronchisepticus).